We begin with the raw amino-acid sequence, 321 residues long: Glucokinase (321 aa).

10–15 (GDIGGT) contacts ATP.

Belongs to the bacterial glucokinase family.

Its subcellular location is the cytoplasm. The enzyme catalyses D-glucose + ATP = D-glucose 6-phosphate + ADP + H(+). This Marinobacter nauticus (strain ATCC 700491 / DSM 11845 / VT8) (Marinobacter aquaeolei) protein is Glucokinase.